We begin with the raw amino-acid sequence, 372 residues long: Glycerol-3-phosphate dehydrogenase [NAD(+)] (372 aa).

Residues 1–16 (MAPSELNCTHQNQHSS) show a composition bias toward polar residues. The segment at 1 to 23 (MAPSELNCTHQNQHSSGYDGPRS) is disordered. NAD(+)-binding positions include 29–34 (GSGNWG), F60, F117, K140, and A173. K140 contributes to the substrate binding site. The active-site Proton acceptor is the K225. NAD(+) contacts are provided by R289, K318, and Q320. 289 to 290 (RN) contributes to the substrate binding site.

Belongs to the NAD-dependent glycerol-3-phosphate dehydrogenase family.

The enzyme catalyses sn-glycerol 3-phosphate + NAD(+) = dihydroxyacetone phosphate + NADH + H(+). The sequence is that of Glycerol-3-phosphate dehydrogenase [NAD(+)] (GPDH) from Cuphea lanceolata (Cigar flower).